The sequence spans 251 residues: MSGHSKWATTKHKKAVIDGRRAKSFAKLIKNIEVAARVGGPDMAGNPALELAVTKAKKTSVPNDNIDRAIKRGSGQLGEAIDYQTIMYEGYGPQGTAILIECLTDNKNRAASEVRLAVSRNGGNMADPGSVSYLFARKGIVSLPQNELSEDDLLMAVLDAGAEEVKSEGENFEVISEPQDLPAIRSALTEAGIEYDTDDAGFVPSMQVELDVENAKKFMRLYDALEDLDDVQNVYSNADVSAEVMAQLDED.

The protein belongs to the TACO1 family.

The protein resides in the cytoplasm. This is Probable transcriptional regulatory protein RSal33209_2002 from Renibacterium salmoninarum (strain ATCC 33209 / DSM 20767 / JCM 11484 / NBRC 15589 / NCIMB 2235).